Consider the following 510-residue polypeptide: Ferredoxin--nitrite reductase (510 aa).

Residues cysteine 396, cysteine 402, cysteine 437, and cysteine 441 each contribute to the [4Fe-4S] cluster site. Position 441 (cysteine 441) interacts with siroheme.

Belongs to the nitrite and sulfite reductase 4Fe-4S domain family.

It carries out the reaction 6 oxidized [2Fe-2S]-[ferredoxin] + NH4(+) + 2 H2O = nitrite + 6 reduced [2Fe-2S]-[ferredoxin] + 8 H(+). This is Ferredoxin--nitrite reductase (nirA) from Leptolyngbya laminosa (Phormidium laminosum).